We begin with the raw amino-acid sequence, 2412 residues long: Genome polyprotein 1 (2412 aa).

The disordered stretch occupies residues 1–23 (MEQTLAQAVSRRGKTNTPMAEER). Residues 474–632 (AMADANNCWS…AARKYPLHVE (159 aa)) form the Helicase ATP-binding domain. 487 to 494 (GHTGSGKS) provides a ligand contact to ATP. The Helicase C-terminal domain occupies 647-813 (GGGDLLDISK…NVPFYMNETF (167 aa)). O-(5'-phospho-RNA)-tyrosine is present on Tyr1234. Positions 1359-1574 (ISFGASTGIL…CGYSSHNALF (216 aa)) constitute a Peptidase C4 domain. Catalysis depends on for nuclear inclusion protein A activity residues His1404, Asp1440, and Cys1507. Residues 1858–1982 (WLHGSGDGSR…AISPQFDEEF (125 aa)) form the RdRp catalytic domain. Residues 2178–2202 (PTEDDGKLKTPSGARIPSSAADGNW) are disordered.

This sequence belongs to the bymoviruses polyprotein 1 family. In terms of processing, VPg is uridylylated by the polymerase and is covalently attached to the 5'-end of the genomic RNA. This uridylylated form acts as a nucleotide-peptide primer for the polymerase. Post-translationally, the viral RNA1 of bymoviruses is expressed as a single polyprotein which undergoes post-translational proteolytic processing by the main proteinase NIa-pro resulting in the production of at least eight individual proteins.

The protein localises to the host cytoplasmic vesicle. It is found in the virion. It catalyses the reaction RNA(n) + a ribonucleoside 5'-triphosphate = RNA(n+1) + diphosphate. The catalysed reaction is Hydrolyzes glutaminyl bonds, and activity is further restricted by preferences for the amino acids in P6 - P1' that vary with the species of potyvirus, e.g. Glu-Xaa-Xaa-Tyr-Xaa-Gln-|-(Ser or Gly) for the enzyme from tobacco etch virus. The natural substrate is the viral polyprotein, but other proteins and oligopeptides containing the appropriate consensus sequence are also cleaved.. Functionally, indispensable for virus replication. Mediates the cap-independent, EIF4E-dependent translation of viral genomic RNAs. Binds to the cap-binding site of host EIF4E and thus interferes with the host EIF4E-dependent mRNA export and translation. VPg-RNA directly binds EIF4E and is a template for transcription. Also forms trimeric complexes with EIF4E-EIF4G, which are templates for translation. Its function is as follows. Has RNA-binding and proteolytic activities. In terms of biological role, an RNA-dependent RNA polymerase that plays an essential role in the virus replication. The chain is Genome polyprotein 1 from Hordeum vulgare (Barley).